The sequence spans 882 residues: Alanine--tRNA ligase (882 aa).

4 residues coordinate Zn(2+): histidine 576, histidine 580, cysteine 678, and histidine 682.

It belongs to the class-II aminoacyl-tRNA synthetase family. The cofactor is Zn(2+).

It is found in the cytoplasm. It catalyses the reaction tRNA(Ala) + L-alanine + ATP = L-alanyl-tRNA(Ala) + AMP + diphosphate. In terms of biological role, catalyzes the attachment of alanine to tRNA(Ala) in a two-step reaction: alanine is first activated by ATP to form Ala-AMP and then transferred to the acceptor end of tRNA(Ala). Also edits incorrectly charged Ser-tRNA(Ala) and Gly-tRNA(Ala) via its editing domain. The polypeptide is Alanine--tRNA ligase (Anaplasma marginale (strain St. Maries)).